Here is a 905-residue protein sequence, read N- to C-terminus: Alanine--tRNA ligase (905 aa).

Residues H569, H573, C693, and H697 each coordinate Zn(2+).

Belongs to the class-II aminoacyl-tRNA synthetase family. The cofactor is Zn(2+).

Its subcellular location is the cytoplasm. It carries out the reaction tRNA(Ala) + L-alanine + ATP = L-alanyl-tRNA(Ala) + AMP + diphosphate. Functionally, catalyzes the attachment of alanine to tRNA(Ala) in a two-step reaction: alanine is first activated by ATP to form Ala-AMP and then transferred to the acceptor end of tRNA(Ala). Also edits incorrectly charged Ser-tRNA(Ala) and Gly-tRNA(Ala) via its editing domain. This is Alanine--tRNA ligase from Roseiflexus castenholzii (strain DSM 13941 / HLO8).